We begin with the raw amino-acid sequence, 646 residues long: MAEPALLDPTAAFDLRLYPAHLFDHELPLAGGGGGDDDDDLPLDGLEFDLPGDFSVEDFLLRSPERDDSGEGSAAGSGPTASPSSSPTTSASNSAVANGSGGEVKHEESDEGRSGGGDPKWSLKRKQASPGPSSDAAKCRRSGDGDVSPSASASRTAVDSDEGGTVCEEEEDERRAARLMRNRESAQLSRQRKKRYVEELEEKVKSMHSVINDLNSRISFVVAENATLRQQLSGGSVNCPPPGVYPPAPIPGMHFPWMPGYAMRPPGSHVPLVPIPRLKPQQPVPSSKVVKKPESKKTVENKSKSKTKTKKVASVSLLGLLLIMLVFGAFIPGFNHNFGMCGQSDNAMFRNFGQSHARVLSVSSQDKSSLNNSDMIGVDVGKMTGNTDGPGKKHQPAHNSSEILPALLYVPRNGKHVKINGNLIIHSVLASEKAVAHKASKDDSDQSARDHKETSVAIARYLSLPGKDVNRQETSSADGPLPQWFREGMEGPILNSGMCSEVFQFDISTASSNPGGIIPASPVVNSSSVNATEKIPAHSAAYHGKLKNRRVMYNEAIPLTGKTANNTEPFNRTSESSSKLPDSKPASSVVVSVLADPREAGNGDGDPRVSPKPLSKIFVVVLVDGVRYVTYSCTLPFKSSSPHLVN.

Residues 1 to 311 lie on the Cytoplasmic side of the membrane; that stretch reads MAEPALLDPT…KSKSKTKTKK (311 aa). Positions 25–172 are disordered; the sequence is HELPLAGGGG…GGTVCEEEED (148 aa). The span at 43 to 53 shows a compositional bias: low complexity; sequence LDGLEFDLPGD. Positions 59–69 are enriched in basic and acidic residues; that stretch reads FLLRSPERDDS. The segment covering 71–98 has biased composition (low complexity); the sequence is EGSAAGSGPTASPSSSPTTSASNSAVAN. Residues 103–113 show a composition bias toward basic and acidic residues; it reads EVKHEESDEGR. The span at 159-172 shows a compositional bias: acidic residues; sequence DSDEGGTVCEEEED. Residues 172–232 form the bZIP domain; sequence DERRAARLMR…AENATLRQQL (61 aa). The interval 174–205 is basic motif; sequence RRAARLMRNRESAQLSRQRKKRYVEELEEKVK. A leucine-zipper region spans residues 211 to 218; it reads INDLNSRI. Residues 272–308 are disordered; the sequence is LVPIPRLKPQQPVPSSKVVKKPESKKTVENKSKSKTK. Low complexity predominate over residues 279–288; the sequence is KPQQPVPSSK. A compositionally biased stretch (basic and acidic residues) spans 291–303; it reads KKPESKKTVENKS. Residues 312–332 form a helical membrane-spanning segment; sequence VASVSLLGLLLIMLVFGAFIP. At 333–646 the chain is on the lumenal side; sequence GFNHNFGMCG…FKSSSPHLVN (314 aa). Asn371, Asn399, Asn525, Asn530, Asn565, and Asn571 each carry an N-linked (GlcNAc...) asparagine glycan. The disordered stretch occupies residues 560–585; that stretch reads TGKTANNTEPFNRTSESSSKLPDSKP. The segment covering 562 to 585 has biased composition (polar residues); the sequence is KTANNTEPFNRTSESSSKLPDSKP.

This sequence belongs to the bZIP family. As to expression, highly expressed in leaf blade, and at lower levels in roots, leaf sheaths, flowers and seeds.

Its subcellular location is the endoplasmic reticulum membrane. The protein localises to the nucleus. Transcription factor involved in endoplasmic reticulum (ER) stress response. Acts as a ER stress sensor and activates the transcription factor BZIP50 and the chaperone BIP1. The polypeptide is bZIP transcription factor 39 (Oryza sativa subsp. japonica (Rice)).